Reading from the N-terminus, the 788-residue chain is MDSSEGCTDMDEPSPGFILNMTSDAKVRSVVEQIDRLSNITTSPPEMGWYDLEFDPLEDEGPFLPFSAYVITGTAGAGKSTSVSALHQNLNCLITGATVVAAQNLSRALKSYCPTIYHAFGFKSRHINICQRKVPKVTQSSIEQLQRYELARYWPTVTDIIREFMRKKQKGQYSSLSQSAFRLLCRMGGANLWTSNIIVIDEAGTLSSHILTAVVFFYWFYNSWLDTPLYRNGAVPCIVCVGSPTQTDAFQSVFNHTQQRNEISACDNVLTFLLGKREVADYIRLDENWALFINNKRCTDPQFGHLLKTLEYNLDISPELMDYIDRFVVPKSKILDPLEYAGWTRLFISHQEVKSFLATLHTCLSSNKDAVSTKLFTCPVVCEVFTEPFEEYKRAVGLTHMTPIEWVTKNLFRLSNYSQFADQDMAVVGTYITDASTQITFATKFVKNSYATLTGKTKKCICGFHGSYQRFKSILDGELFIESHSHDNPAYVYSFLSTLLYNAMYSFYAHGVKQGHEEFLRDLRELPVSQELISEMSSEDVLGQEGDTDAFYLTASLPPSPTHAALPTLVAYYSGAKELFCNRLALARRHFGDEFLHSDFSTFTVNIVVRDGVDFVSTSPGLHGLVAYASTIDTYIIQGYTFLPVRFGRPGGQRLSEDLRRKMPSIVVQDSSGFIACLENNVTKMTETLEGGDVFNICCAGDYGISSNLAMTIVKAQGVSLSRVAISFGNHRNIRASLVYVGVSRAIDARYLVMDSNPLKLMDRGDAQSPSSKYIIKALCNPKTTLIY.

73-80 (GTAGAGKS) contributes to the ATP binding site.

Belongs to the herpesviridae helicase family. In terms of assembly, associates with the primase and the primase-associated factor to form the helicase-primase complex.

The protein resides in the host nucleus. In terms of biological role, component of the helicase/primase complex. Unwinds the DNA at the replication forks and generates single-stranded DNA for both leading and lagging strand synthesis. The primase synthesizes short RNA primers on the lagging strand that the polymerase elongates using dNTPs. Possesses helicase-like motifs and therefore may act as the helicase subunit of the complex. The polypeptide is DNA replication helicase (Homo sapiens (Human)).